The following is a 238-amino-acid chain: Probable transcriptional regulatory protein VIBHAR_07036 (238 aa).

This sequence belongs to the TACO1 family.

Its subcellular location is the cytoplasm. The chain is Probable transcriptional regulatory protein VIBHAR_07036 from Vibrio campbellii (strain ATCC BAA-1116).